An 891-amino-acid chain; its full sequence is Mating-type protein A-alpha Z3 (891 aa).

Positions 111–189 form a DNA-binding region, homeobox; TALE-type; it reads EWQENMPPVP…AARIRIGWTH (79 aa). A compositionally biased stretch (basic and acidic residues) spans 331–360; the sequence is AAHEKRQQARREQRQAKNERDAAQMREEQR. Disordered regions lie at residues 331-592, 606-671, 779-812, and 836-861; these read AAHE…VNWD, YLDS…ASET, SILS…VEPS, and PKKD…SPDT. 2 stretches are compositionally biased toward acidic residues: residues 369 to 400 and 427 to 457; these read SSDD…SDSD and ADDE…EEDT. Low complexity-rich tracts occupy residues 542–559 and 612–650; these read PSKT…KSST and SSRP…SSVS. Residues 651–660 are compositionally biased toward polar residues; sequence TCETVGTDSS. The span at 841–850 shows a compositional bias: basic and acidic residues; sequence RYAERAERRA.

The protein belongs to the TALE/M-ATYP homeobox family.

Its subcellular location is the nucleus. Functionally, specifies A-alpha-3 mating-type. May regulate the expression of genes specific to the homokaryotic cell type. In Schizophyllum commune (Split gill fungus), this protein is Mating-type protein A-alpha Z3.